Reading from the N-terminus, the 297-residue chain is Adrenocorticotropic hormone receptor (297 aa).

Topologically, residues 1 to 23 (MKHIINSYENINNTARNNSDCPR) are extracellular. N-linked (GlcNAc...) asparagine glycosylation is found at N12 and N17. 2 cysteine pairs are disulfide-bonded: C21–C253 and C245–C251. A helical transmembrane segment spans residues 24–49 (VVLPEEIFFTISIVGVLENLIVLLAV). Over 50-58 (FKNKNLQAP) the chain is Cytoplasmic. Residues 59–79 (MYFFICSLAISDMLGSLYKIL) form a helical membrane-spanning segment. Topologically, residues 80-104 (ENILIILRNMGYLKPRGSFETTADD) are extracellular. The chain crosses the membrane as a helical span at residues 105–126 (IIDSLFVLSLLGSIFSLSVIAA). Topologically, residues 127–147 (DRYITIFHALRYHSIVTMRRT) are cytoplasmic. Residues 148–168 (VVVLTVIWTFCTGTGITMVIF) traverse the membrane as a helical segment. Residues 169-180 (SHHVPTVITFTS) lie on the Extracellular side of the membrane. A helical transmembrane segment spans residues 181 to 199 (LFPLMLVFILCLYVHMFLL). The Cytoplasmic segment spans residues 200–217 (ARSHTRKISTLPRANMKG). The helical transmembrane segment at 218-244 (AITLTILLGVFIFCWAPFVLHVLLMTF) threads the bilayer. Residues 245 to 256 (CPSNPYCACYMS) lie on the Extracellular side of the membrane. Residues 257–278 (LFQVNGMLIMCNAVIDPFIYAF) traverse the membrane as a helical segment. Residues 279–297 (RSPELRDAFKKMIFCSRYW) lie on the Cytoplasmic side of the membrane. C293 carries S-palmitoyl cysteine lipidation.

This sequence belongs to the G-protein coupled receptor 1 family. In terms of assembly, homodimer. Interacts with corticotropin (ACTH). Interacts with MRAP; this interaction targets MC2R to the plasma membrane. Interacts with MRAP2; competing with MRAP for binding to MC2R and impairing the binding of corticotropin (ACTH). Post-translationally, ubiquitinated by MGRN1 that may be involved in post-endocytic trafficking and/or degradation of internalized receptor. As to expression, melanocytes and corticoadrenal tissue.

It is found in the cell membrane. Hormone receptor primarily expressed in adrenal cortex that plays a key role in regulating adrenocortical function. Upon corticotropin (ACTH) binding, facilitates the release of adrenal glucocorticoids, including cortisol and corticosterone. In addition, MC2R is required for fetal and neonatal adrenal gland development. Mechanistically, activates adenylate cyclase (cAMP), the MAPK cascade as well as the cAMP-dependent protein kinase A pathway leading to steroidogenic factor 1/NR5A1-mediated transcriptional activation. The chain is Adrenocorticotropic hormone receptor (MC2R) from Homo sapiens (Human).